Reading from the N-terminus, the 684-residue chain is MKQERRRKRQPGPPRLELVVAHPREEEMAGLDGGGDAEEGATHARGGGGAPPPWREQLTARGLVASLAVGAMYSVIVMKLNLTTGLVPTLNVSAALIAFVVLRGWTQALARLGFAARPFTRQENTVVQTCAVACYSIAVGGGFGSYLLGLNKRTYEMAGEDTEGNVPGSYKEPGIAWMTGFLLAVSFVGLLALVPLRKVMIIDYKLTYPSGTATAVLINGFHTPHGDAMAKQQVNGFTKYFAMSFFWSFFQWFYSGGDNCGFSQFPTFGLKAWQQTFFFDFSLTYVGAGMICSHLVNLSLLLGAILSWGVMWPLISDLKGDWYSADIPESSMKSLQGYKAFICVALILGDGLYNFVKIVALTIKNLFDSSKLKNAKKGEDMPVLDELHRNEVFTTDNIPSWLAFSGYLGLTFIAVIAIPMMFHEMKWYYVVIAYLLAPALGFCNAYGAGLTDINMAYNYGKIALFILAAWAGKDSGVVAGLVGCGLVKSLVSISADLMHDFKTGHLTLTSPRSMIIAQAIGTVMGCVISPLTFFLFYSAFDIGNPEGYWKAPYALVYRNMAILGVEGFSALPQHCLQLCYGFFGFAVAANLTRDLCPPKYGRWVPLPMAMGVPFLVGASFAIDMCIGSLIVFTWHIIDKSKAALMVPAVASGLICGDGLWIFPASLLALAKISPPMCMAFRSTN.

Residues M1 to Q10 show a composition bias toward basic residues. The segment at M1 to R55 is disordered. 14 consecutive transmembrane segments (helical) span residues L58–M78, L82–L102, C130–L150, G174–V194, V234–Y254, L295–I315, F341–L361, L402–F422, V430–L450, I462–V482, I515–L535, F568–A588, V612–F632, and A642–F662.

Belongs to the YSL (TC 2.A.67.2) family.

The protein localises to the membrane. May be involved in the transport of nicotianamine-chelated metals. The protein is Probable metal-nicotianamine transporter YSL9 (YSL9) of Oryza sativa subsp. japonica (Rice).